The chain runs to 347 residues: MQVTRIIPDVPSFLASMMTFDTWSILFMVVQSLVIFLVVVIVAAMMIIYERRMLALWQDRYGPNRVGPFGSLQLVADMLKIFFKEDWTPNFTDKFMFTLAPAVAMFTALASFAIIPISPTLGVADWDIGILFFFAMAGIAVYAVLFGGWASANKFSLLGGLRSAAQTISYEVFLGLSLMGVVALTGSFNLRAIVEAQADGWYIIPQFFGFLTFVVAGVAVTHRHPFDQPEAEQELAEGYHVEYSGMKFGMFFIGEYVNVVLISALMTCLFFGGWLAPFNLDIPFIPPAFWFMIKTLFFMTMFILARGSLMRPRYDQVMNFGWKVCLPVTLINLLVTAAVILIFSPTL.

8 consecutive transmembrane segments (helical) span residues 25–45, 95–115, 128–148, 168–188, 200–220, 251–271, 284–304, and 324–344; these read ILFMVVQSLVIFLVVVIVAAM, FMFTLAPAVAMFTALASFAII, IGILFFFAMAGIAVYAVLFGG, ISYEVFLGLSLMGVVALTGSF, GWYIIPQFFGFLTFVVAGVAV, FFIGEYVNVVLISALMTCLFF, FIPPAFWFMIKTLFFMTMFIL, and VCLPVTLINLLVTAAVILIFS.

This sequence belongs to the complex I subunit 1 family. As to quaternary structure, NDH-1 is composed of 14 different subunits. Subunits NuoA, H, J, K, L, M, N constitute the membrane sector of the complex.

It localises to the cell inner membrane. The enzyme catalyses a quinone + NADH + 5 H(+)(in) = a quinol + NAD(+) + 4 H(+)(out). Its function is as follows. NDH-1 shuttles electrons from NADH, via FMN and iron-sulfur (Fe-S) centers, to quinones in the respiratory chain. The immediate electron acceptor for the enzyme in this species is believed to be ubiquinone. Couples the redox reaction to proton translocation (for every two electrons transferred, four hydrogen ions are translocated across the cytoplasmic membrane), and thus conserves the redox energy in a proton gradient. This subunit may bind ubiquinone. This Psychrobacter arcticus (strain DSM 17307 / VKM B-2377 / 273-4) protein is NADH-quinone oxidoreductase subunit H.